Consider the following 310-residue polypeptide: MSKARLRKGRALTGVVLLNKPQGMSSNHALQRVKRLYNAQKAGHTGALDPLATGILPVCLGEATKFSQYLLDADKAYRVEATLGVRTTTSDAEGEVVEEKPVAVDTAKVADAIKQFIGEQDQSPSIYSALKHEGRPLYYYARQGIEVPKKTRTITVHSIELLNIQDNKVTLQVSCSKGTYIRTLVDDLGQLLGCGAHVSMLHRNAVADIAEAAMVTLEQLETLAEEGYEGLDALLHPADLLLGQLPEVTVTQAQTRDFLHGQPIPLPEQNGNDAEEWRVATENSLFLGVARVKNAELWPRRVIAREHVDL.

The active-site Nucleophile is the Asp49.

The protein belongs to the pseudouridine synthase TruB family. Type 1 subfamily.

The catalysed reaction is uridine(55) in tRNA = pseudouridine(55) in tRNA. Its function is as follows. Responsible for synthesis of pseudouridine from uracil-55 in the psi GC loop of transfer RNAs. The sequence is that of tRNA pseudouridine synthase B from Idiomarina loihiensis (strain ATCC BAA-735 / DSM 15497 / L2-TR).